A 602-amino-acid polypeptide reads, in one-letter code: Bifunctional xylanase/deacetylase (602 aa).

Residues 1–14 form the signal peptide; the sequence is MSATLLVPSMTVKA. A GH11 domain is found at 17–211; that stretch reads TIYNNKTGNQ…SSGSASVYKN (195 aa). The active-site Nucleophile is the Glu-108. The active-site Proton donor is the Glu-198. The disordered stretch occupies residues 216-240; it reads GGSSSSSGNQGGNQGGNTGNENAGN. Residues 224 to 233 are compositionally biased toward gly residues; the sequence is NQGGNQGGNT. One can recognise a CBM6 domain in the interval 249–366; sequence DKIQCETMTK…DAYLDYFNNS (118 aa). Positions 402–578 constitute a NodB homology domain; it reads KLIALTFDDG…GLKNQGYTFV (177 aa).

Belongs to the glycosyl hydrolase 11 (cellulase G) family. In the later growth phases, seems to undergo a proteolytic cleavage into a 30 kDa protein possessing xylanolytic activity.

It localises to the secreted. It carries out the reaction Endohydrolysis of (1-&gt;4)-beta-D-xylosidic linkages in xylans.. It participates in glycan degradation; xylan degradation. Its function is as follows. Endo-acting xylanase which specifically cleaves internal linkages on the xylan backbone, releasing xylooligosaccharides. Is also probably able, via its C-terminal domain, to remove acetyl groups from acetylated xylan, and thus it is probably capable of hydrolyzing acetylated xylan. The protein is Bifunctional xylanase/deacetylase (xyn11A) of Pseudobutyrivibrio xylanivorans.